The following is a 163-amino-acid chain: Putative pre-16S rRNA nuclease (163 aa).

The protein belongs to the YqgF nuclease family.

The protein resides in the cytoplasm. Could be a nuclease involved in processing of the 5'-end of pre-16S rRNA. The chain is Putative pre-16S rRNA nuclease from Nitrobacter winogradskyi (strain ATCC 25391 / DSM 10237 / CIP 104748 / NCIMB 11846 / Nb-255).